The following is a 547-amino-acid chain: Ganoderic acid synthetase CYP5150L8 (547 aa).

Residues proline 2 to phenylalanine 22 traverse the membrane as a helical segment. Cysteine 487 provides a ligand contact to heme.

It belongs to the cytochrome P450 family. Heme is required as a cofactor.

It is found in the membrane. It catalyses the reaction lanosterol + reduced [NADPH--hemoprotein reductase] + O2 = 26-hydroxylanosterol + oxidized [NADPH--hemoprotein reductase] + H2O + H(+). The catalysed reaction is 26-hydroxylanosterol + reduced [NADPH--hemoprotein reductase] + O2 = 26-oxolanosterol + oxidized [NADPH--hemoprotein reductase] + 2 H2O + H(+). It carries out the reaction 26-oxolanosterol + reduced [NADPH--hemoprotein reductase] + O2 = 3beta-hydroxy-lanosta-8, 24-dien-26-oate + oxidized [NADPH--hemoprotein reductase] + H2O + 2 H(+). It functions in the pathway secondary metabolite biosynthesis; terpenoid biosynthesis. Cytochrome P450 monooxygenase that is involved in the biosynthesis of ganoderic acids (GA), a group of highly oxygenated lanostane-type triterpenoids which well recognized as a main group of unique bioactive compounds in the medicinal mushroom Ganoderma lucidum. CYP5150L8 alone is able to catalyze the three-step oxidations at C-26 from lanosterol to 3-hydroxy-lanosta-8,24-dien-26-oic acid (also called ganoderic acid Z or HLDOA). The methyl group of lanosterol at C-26 is first oxidized into hydroxyl group to form 3-hydroxy-lanosta-8,24-dien-26-ol (HLDO). The hydroxyl group at C-26 of HLDO is further converted into a formyl group to form 3-hydroxy-lanosta-8,24-dien-26-al (HLDA). Finally, the formyl group is oxidized into a carboxyl group to produce 3-hydroxy-lanosta-8,24-dien-26-oic acid (HLDOA). The protein is Ganoderic acid synthetase CYP5150L8 of Ganoderma lucidum (Ling zhi medicinal fungus).